The following is a 332-amino-acid chain: tRNA dimethylallyltransferase (332 aa).

ATP is bound at residue 30–37 (GPTAVGKT). Residue 32-37 (TAVGKT) participates in substrate binding. The tract at residues 57–60 (DSMQ) is interaction with substrate tRNA.

This sequence belongs to the IPP transferase family. In terms of assembly, monomer. Mg(2+) serves as cofactor.

It catalyses the reaction adenosine(37) in tRNA + dimethylallyl diphosphate = N(6)-dimethylallyladenosine(37) in tRNA + diphosphate. Functionally, catalyzes the transfer of a dimethylallyl group onto the adenine at position 37 in tRNAs that read codons beginning with uridine, leading to the formation of N6-(dimethylallyl)adenosine (i(6)A). This Natranaerobius thermophilus (strain ATCC BAA-1301 / DSM 18059 / JW/NM-WN-LF) protein is tRNA dimethylallyltransferase.